A 330-amino-acid polypeptide reads, in one-letter code: Beta-ketoacyl-[acyl-carrier-protein] synthase III 2 (330 aa).

Residues Cys118 and His246 contribute to the active site. An ACP-binding region spans residues 247 to 251 (QANLR). The active site involves Asn276.

The protein belongs to the thiolase-like superfamily. FabH family. Homodimer.

Its subcellular location is the cytoplasm. It catalyses the reaction malonyl-[ACP] + acetyl-CoA + H(+) = 3-oxobutanoyl-[ACP] + CO2 + CoA. It participates in lipid metabolism; fatty acid biosynthesis. Functionally, catalyzes the condensation reaction of fatty acid synthesis by the addition to an acyl acceptor of two carbons from malonyl-ACP. Catalyzes the first condensation reaction which initiates fatty acid synthesis and may therefore play a role in governing the total rate of fatty acid production. Possesses both acetoacetyl-ACP synthase and acetyl transacylase activities. Its substrate specificity determines the biosynthesis of branched-chain and/or straight-chain of fatty acids. The sequence is that of Beta-ketoacyl-[acyl-carrier-protein] synthase III 2 from Streptomyces coelicolor (strain ATCC BAA-471 / A3(2) / M145).